Consider the following 599-residue polypeptide: Beta-(1--&gt;2)glucan export ATP-binding/permease protein NdvA (599 aa).

The ABC transmembrane type-1 domain occupies 21-301 (TITMCVASVL…ISAFINQTVT (281 aa)). 5 helical membrane passes run 22–42 (ITMCVASVLVALVTLAEPVLF), 55–75 (IFSPLLMWAALGGFNIMAAVF), 156–176 (MRMSLVLIVLGVIYVMIGQLV), 248–268 (MASTFSMVVVLVLGAYFVTKG), and 276–296 (IAFIGFAQLMIGRLDQISAFI). Positions 335 to 569 (IVFDNVTYEF…GGRFSDLLRA (235 aa)) constitute an ABC transporter domain. 368 to 375 (GPTGAGKT) provides a ligand contact to ATP.

This sequence belongs to the ABC transporter superfamily. Beta-(1--&gt;2)glucan exporter (TC 3.A.1.108.1) family. As to quaternary structure, homodimer.

It localises to the cell inner membrane. The enzyme catalyses [(1-&gt;2)-beta-D-glucosyl](n)(in) + ATP + H2O = [(1-&gt;2)-beta-D-glucosyl](n)(out) + ADP + phosphate + H(+). Functionally, involved in beta-(1--&gt;2)glucan export. Its export to the periplasmic space is required to exert its action as a virulence factor. Transmembrane domains (TMD) form a pore in the inner membrane and the ATP-binding domain (NBD) is responsible for energy generation. The chain is Beta-(1--&gt;2)glucan export ATP-binding/permease protein NdvA from Brucella abortus (strain 2308).